A 248-amino-acid chain; its full sequence is Ubiquinone/menaquinone biosynthesis C-methyltransferase UbiE (248 aa).

2 residues coordinate S-adenosyl-L-methionine: Ser-68 and Asp-92.

The protein belongs to the class I-like SAM-binding methyltransferase superfamily. MenG/UbiE family.

It catalyses the reaction a 2-demethylmenaquinol + S-adenosyl-L-methionine = a menaquinol + S-adenosyl-L-homocysteine + H(+). The catalysed reaction is a 2-methoxy-6-(all-trans-polyprenyl)benzene-1,4-diol + S-adenosyl-L-methionine = a 5-methoxy-2-methyl-3-(all-trans-polyprenyl)benzene-1,4-diol + S-adenosyl-L-homocysteine + H(+). The protein operates within quinol/quinone metabolism; menaquinone biosynthesis; menaquinol from 1,4-dihydroxy-2-naphthoate: step 2/2. It participates in cofactor biosynthesis; ubiquinone biosynthesis. In terms of biological role, methyltransferase required for the conversion of demethylmenaquinol (DMKH2) to menaquinol (MKH2) and the conversion of 2-polyprenyl-6-methoxy-1,4-benzoquinol (DDMQH2) to 2-polyprenyl-3-methyl-6-methoxy-1,4-benzoquinol (DMQH2). The polypeptide is Ubiquinone/menaquinone biosynthesis C-methyltransferase UbiE (Rickettsia akari (strain Hartford)).